We begin with the raw amino-acid sequence, 350 residues long: Galactokinase (350 aa).

14–17 (EHTD) is a substrate binding site. ATP is bound by residues Ser-46 and 98 to 104 (GSGLSSS). Mg(2+)-binding residues include Ser-104 and Glu-136. Asp-148 (proton acceptor) is an active-site residue. Residue Tyr-197 participates in substrate binding.

The protein belongs to the GHMP kinase family. GalK subfamily.

The protein localises to the cytoplasm. It carries out the reaction alpha-D-galactose + ATP = alpha-D-galactose 1-phosphate + ADP + H(+). Its pathway is carbohydrate metabolism; galactose metabolism. Catalyzes the transfer of the gamma-phosphate of ATP to D-galactose to form alpha-D-galactose-1-phosphate (Gal-1-P). This Thermococcus kodakarensis (strain ATCC BAA-918 / JCM 12380 / KOD1) (Pyrococcus kodakaraensis (strain KOD1)) protein is Galactokinase.